The sequence spans 393 residues: RNA pseudouridine synthase 7 (393 aa).

An S4 RNA-binding domain is found at 49–118; sequence KTIVDLFTDE…GDITILQNEA (70 aa). Aspartate 162 is an active-site residue.

The protein belongs to the pseudouridine synthase RluA family.

The enzyme catalyses a uridine in RNA = a pseudouridine in RNA. This chain is RNA pseudouridine synthase 7, found in Oryza sativa subsp. japonica (Rice).